Consider the following 204-residue polypeptide: UPF0301 protein Mflv_0850 (204 aa).

The protein belongs to the UPF0301 (AlgH) family.

The protein is UPF0301 protein Mflv_0850 of Mycolicibacterium gilvum (strain PYR-GCK) (Mycobacterium gilvum (strain PYR-GCK)).